The following is a 465-amino-acid chain: Uronate isomerase (465 aa).

Belongs to the metallo-dependent hydrolases superfamily. Uronate isomerase family.

The catalysed reaction is D-glucuronate = D-fructuronate. It catalyses the reaction aldehydo-D-galacturonate = keto-D-tagaturonate. The protein operates within carbohydrate metabolism; pentose and glucuronate interconversion. The chain is Uronate isomerase from Bacillus velezensis (strain DSM 23117 / BGSC 10A6 / LMG 26770 / FZB42) (Bacillus amyloliquefaciens subsp. plantarum).